A 168-amino-acid polypeptide reads, in one-letter code: Gastrula zinc finger protein XlCGF42.1 (168 aa).

6 C2H2-type zinc fingers span residues 6–28 (YSCS…RKSH), 34–56 (FCCS…YRTH), 62–84 (CICS…QKYH), 90–112 (FSCS…LRIH), 118–140 (YTCT…LRIH), and 146–165 (FTCS…DRHH).

The protein belongs to the krueppel C2H2-type zinc-finger protein family.

Its subcellular location is the nucleus. In terms of biological role, may be involved in transcriptional regulation. This is Gastrula zinc finger protein XlCGF42.1 from Xenopus laevis (African clawed frog).